Consider the following 963-residue polypeptide: Glycine dehydrogenase (decarboxylating) (963 aa).

Residue Lys707 is modified to N6-(pyridoxal phosphate)lysine.

This sequence belongs to the GcvP family. As to quaternary structure, the glycine cleavage system is composed of four proteins: P, T, L and H. Pyridoxal 5'-phosphate is required as a cofactor.

The catalysed reaction is N(6)-[(R)-lipoyl]-L-lysyl-[glycine-cleavage complex H protein] + glycine + H(+) = N(6)-[(R)-S(8)-aminomethyldihydrolipoyl]-L-lysyl-[glycine-cleavage complex H protein] + CO2. In terms of biological role, the glycine cleavage system catalyzes the degradation of glycine. The P protein binds the alpha-amino group of glycine through its pyridoxal phosphate cofactor; CO(2) is released and the remaining methylamine moiety is then transferred to the lipoamide cofactor of the H protein. In Dechloromonas aromatica (strain RCB), this protein is Glycine dehydrogenase (decarboxylating).